A 517-amino-acid chain; its full sequence is Maturase K (517 aa).

It belongs to the intron maturase 2 family. MatK subfamily.

It localises to the plastid. It is found in the chloroplast. In terms of biological role, usually encoded in the trnK tRNA gene intron. Probably assists in splicing its own and other chloroplast group II introns. This chain is Maturase K, found in Paris tetraphylla.